The sequence spans 197 residues: Carnitine operon protein CaiE (197 aa).

Positions 177 to 197 (TAPEANRPRLRGTTEVKPKGQ) are disordered. A compositionally biased stretch (basic and acidic residues) spans 188-197 (GTTEVKPKGQ).

Belongs to the transferase hexapeptide repeat family.

It functions in the pathway amine and polyamine metabolism; carnitine metabolism. Functionally, overproduction of CaiE stimulates the activity of CaiB and CaiD. The chain is Carnitine operon protein CaiE from Proteus sp. (strain LE138).